Consider the following 275-residue polypeptide: uncharacterized protein (275 aa).

Over residues 148 to 158 the composition is skewed to polar residues; it reads TFPTTAPSITP. Residues 148–173 form a disordered region; sequence TFPTTAPSITPGNKEGEKTTSTDTDE. Residues 187–207 form a helical membrane-spanning segment; the sequence is ILIAVTLLLSGVAIIVFVIFE. Residues 234 to 264 are disordered; it reads GQPPGTAESKPDSQPQKVGQDAANSSNPKKA. Residues 245–261 are compositionally biased toward polar residues; that stretch reads DSQPQKVGQDAANSSNP.

Its subcellular location is the membrane. This is an uncharacterized protein from Homo sapiens (Human).